A 727-amino-acid polypeptide reads, in one-letter code: Procollagen-lysine,2-oxoglutarate 5-dioxygenase 1 (727 aa).

Residues 1 to 18 (MRPLLLLAPLGWLLLAEA) form the signal peptide. N-linked (GlcNAc...) asparagine glycosylation is found at Asn163, Asn197, and Asn538. One can recognise a Fe2OG dioxygenase domain in the interval 636 to 727 (QFDLAFVVRY…RYIAVSFVDP (92 aa)). Fe cation is bound by residues His656 and Asp658. An N-linked (GlcNAc...) asparagine glycan is attached at Asn686. His708 provides a ligand contact to Fe cation. Arg718 is a catalytic residue.

Homodimer. Identified in a complex with P3H3 and P3H4. Fe(2+) serves as cofactor. The cofactor is L-ascorbate.

The protein localises to the rough endoplasmic reticulum membrane. It carries out the reaction L-lysyl-[collagen] + 2-oxoglutarate + O2 = (5R)-5-hydroxy-L-lysyl-[collagen] + succinate + CO2. In terms of biological role, part of a complex composed of PLOD1, P3H3 and P3H4 that catalyzes hydroxylation of lysine residues in collagen alpha chains and is required for normal assembly and cross-linkling of collagen fibrils. Forms hydroxylysine residues in -Xaa-Lys-Gly- sequences in collagens. These hydroxylysines serve as sites of attachment for carbohydrate units and are essential for the stability of the intermolecular collagen cross-links. The polypeptide is Procollagen-lysine,2-oxoglutarate 5-dioxygenase 1 (PLOD1) (Pongo abelii (Sumatran orangutan)).